The primary structure comprises 74 residues: MKQSFYRYLMTQRDPNNYEPVAQFANNAFFDQSFPKHEGDYELLSQYLELNGSYLPSMLIFDEAYQLYQESEQA.

It belongs to the UPF0346 family.

The protein is UPF0346 protein LCA_0996 of Latilactobacillus sakei subsp. sakei (strain 23K) (Lactobacillus sakei subsp. sakei).